A 176-amino-acid polypeptide reads, in one-letter code: Inner membrane-spanning protein YciB (176 aa).

6 consecutive transmembrane segments (helical) span residues 3–23 (FLFD…WGIF), 24–44 (TATA…AFRH), 49–69 (TMLW…LVLH), 72–92 (KFIQ…LLAA), 121–141 (VAWA…VHNF), and 149–169 (FKLF…SLWL).

The protein belongs to the YciB family.

It is found in the cell inner membrane. Its function is as follows. Plays a role in cell envelope biogenesis, maintenance of cell envelope integrity and membrane homeostasis. The polypeptide is Inner membrane-spanning protein YciB (Burkholderia orbicola (strain MC0-3)).